Reading from the N-terminus, the 86-residue chain is Large ribosomal subunit protein bL31B (86 aa).

Belongs to the bacterial ribosomal protein bL31 family. Type B subfamily. In terms of assembly, part of the 50S ribosomal subunit.

The sequence is that of Large ribosomal subunit protein bL31B from Cupriavidus necator (strain ATCC 17699 / DSM 428 / KCTC 22496 / NCIMB 10442 / H16 / Stanier 337) (Ralstonia eutropha).